Reading from the N-terminus, the 235-residue chain is tRNA (guanine-N(7)-)-methyltransferase (235 aa).

S-adenosyl-L-methionine-binding positions include G60, 83–84 (EI), 116–117 (NA), and L136. D139 is a catalytic residue. 214–216 (SEE) lines the S-adenosyl-L-methionine pocket.

It belongs to the class I-like SAM-binding methyltransferase superfamily. TrmB family.

Its subcellular location is the nucleus. It carries out the reaction guanosine(46) in tRNA + S-adenosyl-L-methionine = N(7)-methylguanosine(46) in tRNA + S-adenosyl-L-homocysteine. The protein operates within tRNA modification; N(7)-methylguanine-tRNA biosynthesis. In terms of biological role, catalyzes the formation of N(7)-methylguanine at position 46 (m7G46) in tRNA. In Anopheles gambiae (African malaria mosquito), this protein is tRNA (guanine-N(7)-)-methyltransferase.